The chain runs to 398 residues: 8-amino-7-oxononanoate synthase (398 aa).

Residue Arg23 participates in substrate binding. Pyridoxal 5'-phosphate is bound at residue 110-111; it reads GY. His135 is a substrate binding site. Residues Ser181, His209, and Thr238 each coordinate pyridoxal 5'-phosphate. Lys241 bears the N6-(pyridoxal phosphate)lysine mark. Substrate is bound at residue Thr355.

This sequence belongs to the class-II pyridoxal-phosphate-dependent aminotransferase family. BioF subfamily. Homodimer. The cofactor is pyridoxal 5'-phosphate.

It carries out the reaction 6-carboxyhexanoyl-[ACP] + L-alanine + H(+) = (8S)-8-amino-7-oxononanoate + holo-[ACP] + CO2. Its pathway is cofactor biosynthesis; biotin biosynthesis. Functionally, catalyzes the decarboxylative condensation of pimeloyl-[acyl-carrier protein] and L-alanine to produce 8-amino-7-oxononanoate (AON), [acyl-carrier protein], and carbon dioxide. This chain is 8-amino-7-oxononanoate synthase, found in Cellvibrio japonicus (strain Ueda107) (Pseudomonas fluorescens subsp. cellulosa).